The chain runs to 387 residues: Succinate--CoA ligase [ADP-forming] subunit beta (387 aa).

ATP contacts are provided by residues K46, 53-55 (GRG), E99, A102, and E107. 2 residues coordinate Mg(2+): N199 and D213. Substrate contacts are provided by residues N264 and 321–323 (GIV).

The protein belongs to the succinate/malate CoA ligase beta subunit family. Heterotetramer of two alpha and two beta subunits. Requires Mg(2+) as cofactor.

It catalyses the reaction succinate + ATP + CoA = succinyl-CoA + ADP + phosphate. It carries out the reaction GTP + succinate + CoA = succinyl-CoA + GDP + phosphate. It participates in carbohydrate metabolism; tricarboxylic acid cycle; succinate from succinyl-CoA (ligase route): step 1/1. In terms of biological role, succinyl-CoA synthetase functions in the citric acid cycle (TCA), coupling the hydrolysis of succinyl-CoA to the synthesis of either ATP or GTP and thus represents the only step of substrate-level phosphorylation in the TCA. The beta subunit provides nucleotide specificity of the enzyme and binds the substrate succinate, while the binding sites for coenzyme A and phosphate are found in the alpha subunit. This chain is Succinate--CoA ligase [ADP-forming] subunit beta, found in Campylobacter jejuni subsp. jejuni serotype O:23/36 (strain 81-176).